Here is a 255-residue protein sequence, read N- to C-terminus: MTNWATLWPNDRLFLSDTYQLIWFDIEADRIEHKHFKAQNSEDISMIPKGFVSFVDNRLPMCINHKGEVYIRVGSFDTAYYQKFGDLDVSDFDDQVLPPDRDFTFNKVVFGDVPQEQLDNQIRDLQSEVSILTSRNVEMNVRENDLLKKVSELEKQIRQSSHNYEKVVEDGVVLSYRKAGGLLNRMVVLNRRLVGQRFVTNQRRWENIIMGSGVHDGSSYMAFNFKESGGSLKVTFDFDKLQNLSPDDLLAMQIA.

Belongs to the tobravirus protein 2b family.

It is found in the virion. In terms of biological role, may function by interacting with a small, flexible domain located at the C-terminus of the CP, forming a bridge between the virus particle and the internal surface of the vector nematode feeding apparatus. The polypeptide is Protein 2b (Phaseolus vulgaris (Kidney bean)).